The chain runs to 247 residues: Adenosylcobinamide-GDP ribazoletransferase (247 aa).

The next 5 membrane-spanning stretches (helical) occupy residues 34 to 54, 59 to 79, 113 to 133, 138 to 158, and 194 to 214; these read IITF…VFMV, CGAP…TGGF, GGLA…ELAL, ILAS…LLMY, and VLLP…AIFI.

This sequence belongs to the CobS family. Mg(2+) is required as a cofactor.

The protein localises to the cell inner membrane. It catalyses the reaction alpha-ribazole + adenosylcob(III)inamide-GDP = adenosylcob(III)alamin + GMP + H(+). The enzyme catalyses alpha-ribazole 5'-phosphate + adenosylcob(III)inamide-GDP = adenosylcob(III)alamin 5'-phosphate + GMP + H(+). Its pathway is cofactor biosynthesis; adenosylcobalamin biosynthesis; adenosylcobalamin from cob(II)yrinate a,c-diamide: step 7/7. Functionally, joins adenosylcobinamide-GDP and alpha-ribazole to generate adenosylcobalamin (Ado-cobalamin). Also synthesizes adenosylcobalamin 5'-phosphate from adenosylcobinamide-GDP and alpha-ribazole 5'-phosphate. This chain is Adenosylcobinamide-GDP ribazoletransferase, found in Escherichia coli O45:K1 (strain S88 / ExPEC).